The following is a 61-amino-acid chain: Small ribosomal subunit protein uS14 (61 aa).

Zn(2+) contacts are provided by cysteine 24, cysteine 27, cysteine 40, and cysteine 43.

The protein belongs to the universal ribosomal protein uS14 family. Zinc-binding uS14 subfamily. In terms of assembly, part of the 30S ribosomal subunit. Contacts proteins S3 and S10. The cofactor is Zn(2+).

Binds 16S rRNA, required for the assembly of 30S particles and may also be responsible for determining the conformation of the 16S rRNA at the A site. The protein is Small ribosomal subunit protein uS14 of Alkaliphilus metalliredigens (strain QYMF).